The chain runs to 483 residues: Proline--tRNA ligase (483 aa).

This sequence belongs to the class-II aminoacyl-tRNA synthetase family. ProS type 3 subfamily. As to quaternary structure, homodimer.

It is found in the cytoplasm. The enzyme catalyses tRNA(Pro) + L-proline + ATP = L-prolyl-tRNA(Pro) + AMP + diphosphate. In terms of biological role, catalyzes the attachment of proline to tRNA(Pro) in a two-step reaction: proline is first activated by ATP to form Pro-AMP and then transferred to the acceptor end of tRNA(Pro). This is Proline--tRNA ligase from Sulfolobus acidocaldarius (strain ATCC 33909 / DSM 639 / JCM 8929 / NBRC 15157 / NCIMB 11770).